A 343-amino-acid polypeptide reads, in one-letter code: MAAAAPGPVELGFAEEAPAWRLRSEQFPSKVGGRPAWLGLAELPGPGALACARCGRPLAFLLQVYAPLPGRDDAFHRSLFLFCCREPLCCAGLRVFRNQLPRNNAFYSYEPPSETEALGTECVCLQLKSGAHLCRVCGCLAPMTCSRCKQAHYCSKEHQTLDWRLGHKQACTQSDKIDHMVPDHNFLFPEFEIVTETEDEILPEVVEMEDYSEVTGSMGGIPEEELDSMAKHESKEDHIFQKFKSKIALEPEQILRYGRGIKPIWISGENIPQEKDIPDCPCGAKRIFEFQVMPQLLNHLKADRLGRSIDWGVLAVFTCAESCSLGSGYTEEFVWKQDVTDTP.

The Zn(2+) site is built by Cys134, Cys137, Cys145, Cys148, Cys154, His158, His167, and Cys171. Residues 134–171 form an MYND-type; atypical zinc finger; the sequence is CRVCGCLAPMTCSRCKQAHYCSKEHQTLDWRLGHKQAC.

Ubiquitinated by PRKN, promoting proteasomal degradation.

Its subcellular location is the nucleus. Functionally, may be a DNA-binding protein with a regulatory function. May play an important role in cell death and/or in regulation of cell proliferation. In Mus musculus (Mouse), this protein is Programmed cell death protein 2 (Pdcd2).